Consider the following 385-residue polypeptide: Tryptophan--tRNA ligase (385 aa).

The short motif at 89-98 is the 'HIGH' region element; sequence PSSKTMHIGH. The 'KMSKS' region motif lies at 268 to 272; that stretch reads KMSAS.

Belongs to the class-I aminoacyl-tRNA synthetase family. In terms of assembly, homodimer.

It catalyses the reaction tRNA(Trp) + L-tryptophan + ATP = L-tryptophyl-tRNA(Trp) + AMP + diphosphate + H(+). The protein is Tryptophan--tRNA ligase of Encephalitozoon cuniculi (strain GB-M1) (Microsporidian parasite).